The primary structure comprises 211 residues: Small ribosomal subunit protein uS4 (211 aa).

Residues 98-161 (RRLDNVVYRL…RDIPFIKENL (64 aa)) form the S4 RNA-binding domain.

This sequence belongs to the universal ribosomal protein uS4 family. As to quaternary structure, part of the 30S ribosomal subunit. Contacts protein S5. The interaction surface between S4 and S5 is involved in control of translational fidelity.

Its function is as follows. One of the primary rRNA binding proteins, it binds directly to 16S rRNA where it nucleates assembly of the body of the 30S subunit. In terms of biological role, with S5 and S12 plays an important role in translational accuracy. In Aquifex aeolicus (strain VF5), this protein is Small ribosomal subunit protein uS4.